A 206-amino-acid chain; its full sequence is Probable N-acetyltransferase 14 (206 aa).

The N-acetyltransferase domain maps to 6 to 206 (LSVREMREDE…TLVREFSKDL (201 aa)). A helical transmembrane segment spans residues 57 to 77 (FVLASFALALLLPVFLAVAAV).

The protein belongs to the camello family. In terms of tissue distribution, expressed in K-562 and HeLa cell lines and in brain.

It localises to the membrane. Functionally, probable acetyltransferase. Its function is as follows. May act as a transcription factor that regulates the expression of coproporphyrinogen oxidase by binding to a promoter regulatory element. The sequence is that of Probable N-acetyltransferase 14 (NAT14) from Homo sapiens (Human).